A 181-amino-acid polypeptide reads, in one-letter code: Major urinary protein 20 (181 aa).

Positions 1-19 (MKLLVLLLCLGLTLVCVHA) are cleaved as a signal peptide. Cysteines 83 and 176 form a disulfide.

This sequence belongs to the calycin superfamily. Lipocalin family. Detected in urine of males but absent from female urine (at protein level).

It is found in the secreted. Functionally, male pheromone which stimulates female sexual attraction to male urinary scent and promotes a strong learned attraction to the airborne urinary odor of an individual male. Promotes spatial learning by rapidly conditioning preference for its remembered location among females and competitor males so that animals prefer to spend time in the site even when scent is absent. In addition to promoting a rapid attraction response, also elicits ultrasonic vocalizations and urinary scent marking in females which do not occur immediately after exposure. Stimulates hippocampal neurogenesis and cell proliferation in the subventricular zone in females. Promotes male aggressive behavior. Response to Mup20 is mediated by a neural circuit extending from the accessory olfactory bulb to a subset of nitric oxidase synthase-expressing neurons in the medial amygdala. As well as acting as a pheromone itself, binds most of the male pheromone, 2-sec-butyl-4,5-dihydrothiazole, in urine and is responsible for its slow release from scent marks. The polypeptide is Major urinary protein 20 (Mus musculus (Mouse)).